Here is a 355-residue protein sequence, read N- to C-terminus: Molybdenum import ATP-binding protein ModC (355 aa).

An ABC transporter domain is found at 1 to 233 (MTLIVEAKQR…PSTASDRREA (233 aa)). Position 31–38 (31–38 (GRSGSGKT)) interacts with ATP. In terms of domain architecture, Mop spans 291-355 (GLSALNILEA…AIIKTVALEA (65 aa)).

It belongs to the ABC transporter superfamily. Molybdate importer (TC 3.A.1.8) family. As to quaternary structure, the complex is composed of two ATP-binding proteins (ModC), two transmembrane proteins (ModB) and a solute-binding protein (ModA).

It localises to the cell inner membrane. It carries out the reaction molybdate(out) + ATP + H2O = molybdate(in) + ADP + phosphate + H(+). Functionally, part of the ABC transporter complex ModABC involved in molybdenum import. Responsible for energy coupling to the transport system. This Rhizobium johnstonii (strain DSM 114642 / LMG 32736 / 3841) (Rhizobium leguminosarum bv. viciae) protein is Molybdenum import ATP-binding protein ModC.